Here is a 23-residue protein sequence, read N- to C-terminus: Basic phospholipase A2 CB1 (23 aa).

Heterodimer of an acidic subunit and a basic chain. The acidic subunit is non-toxic, without enzymatic activity and comprises 3 peptides that are cross-linked by 7 disulfide bridges. The basic subunit is toxic, has phospholipase A2 activity and is composed of a single chain. Requires Ca(2+) as cofactor. Post-translationally, contains 7 disulfide bonds. In terms of tissue distribution, expressed by the venom gland.

Its subcellular location is the secreted. The catalysed reaction is a 1,2-diacyl-sn-glycero-3-phosphocholine + H2O = a 1-acyl-sn-glycero-3-phosphocholine + a fatty acid + H(+). In terms of biological role, snake venom phospholipase A2 (PLA2) that shows presynaptic neurotoxicity. PLA2 catalyzes the calcium-dependent hydrolysis of the 2-acyl groups in 3-sn-phosphoglycerides. This Crotalus basiliscus (Mexican west-coast rattlesnake) protein is Basic phospholipase A2 CB1.